A 511-amino-acid chain; its full sequence is MLHRINPVRFSMQSCQRYFSKLVSPLEQHKSNTFTNRVRIPIEAGQPLHETRPFLIKSGELTPGISALEYYERRIRLAETLPPKSCVILAGNDIQFASGAVFYPFQQENDLFYLSGWNEPNSVMILEKPTDSLSDTIFHMLVPPKDAFAEKWEGFRSGVYGVQEIFNADESASINDLSKYLPKIINRNDFIYFDMLSTSNPSSSNFKHIKSLLDGSGNSNRSLNSIANKTIKPISKRIAEFRKIKSPQELRIMRRAGQISGRSFNQAFAKRFRNERTLDSFLHYKFISGGCDKDAYIPVVATGSNSLCIHYTRNDDVMFDDEMVLVDAAGSLGGYCADISRTWPNSGKFTDAQRDLYEAVLNVQRDCIKLCKASNNYSLHDIHEKSITLMKQELKNLGIDKVSGWNVEKLYPHYIGHNLGLDVHDVPKVSRYEPLKVGQVITIEPGLYIPNEESFPSYFRNVGIRIEDDIAIGEDTYTNLTVEAVKEIDDLENVMQNGLSTKFEEDQVAPL.

5 residues coordinate Mn(2+): aspartate 327, aspartate 338, histidine 417, glutamate 444, and glutamate 467.

Belongs to the peptidase M24B family. Requires Mn(2+) as cofactor.

It is found in the nucleus. The protein resides in the mitochondrion inner membrane. The enzyme catalyses The enzyme cleaves the 36-Pro-Pro-37 bond of cysteine desulfurase (EC 2.8.1.7) removing three amino acid residues (Tyr-Ser-Pro) from the N-terminus after cleavage by mitochondrial processing peptidase.. Aminopeptidase which cleaves preprotein intermediates that carry destabilizing N-ter amino acid residues after the mitochondrial processing peptidase (MPP) cleavage site and is thus critical for stabilization of the mitochondrial proteome. This chain is Intermediate cleaving peptidase 55 (ICP55), found in Saccharomyces cerevisiae (strain ATCC 204508 / S288c) (Baker's yeast).